The following is a 389-amino-acid chain: MSVRTLPLLFLNLGGEMLYILDQRLRAQNIPGDKARKDEWTEVDRKRVLNDIISTMFNRKFMEELFKPQELYSKKALRTVYERLAHASIMKLNQASMDKLYDLMTMAFKYQVLLCPRPKDVLLVTFNHLDTIKGFIRDSPTILQQVDETLRQLTEIYGGLSAGEFQLIRQTLLIFFQDLHIRVSMFLKDKVQNNNGRFVLPVSGPVPWGTEVPGLIRMFNNKGEEVKRIEFKHGGNYVPAPKEGSFELYGDRVLKLGTNMYSVNQPVETHVSGSSKNLASWTQESIAPNPLAKEELNFLARLMGGMEIKKPSGPEPGFRLNLFTTDEEEEQAALTRPEELSYEVINIQATQDQQRSEELARIMGEFEITEQPRLSTSKGDDLLAMMDEL.

As to expression, expressed predominantly in testis, also found in placenta and to a lesser extent in thymus and small intestine; abundantly expressed in tumor-derived cell lines. Ubiquitously expressed.

The protein resides in the basal cell membrane. Functionally, may be involved in drug clearance in the placenta. This is Protein OSCP1 (OSCP1) from Homo sapiens (Human).